The following is a 259-amino-acid chain: Short-chain dehydrogenase chry4 (259 aa).

7 residues coordinate NADP(+): Arg-37, Asp-55, Asn-81, Tyr-154, Lys-158, Val-185, and Thr-187. Tyr-154 serves as the catalytic Proton donor. The active-site Lowers pKa of active site Tyr is Lys-158.

This sequence belongs to the short-chain dehydrogenases/reductases (SDR) family.

Its pathway is pigment biosynthesis. Functionally, short-chain dehydrogenase; part of the gene cluster that mediates the biosynthesis of the yellow pigment chrysogine. Pyruvic acid and anthranilic acid are likely substrates for the nonribosomal peptide synthetase chry1/NRPS14, with pyruvic acid adenylated by the first A domain and anthranilic acid by the second. If pyruvic acid and anthranilic acid are merged and released from chry1/NRPS14 by hydrolysis, a subsequent amidation would lead to 2-pyruvoylaminobenzamide. This process is probably catalyzed by the amidotransferase chry2 using glutamine as amino donor. The dehydrogenase chry5 that has a terminal berberine bridge domain for C-N cyclization could catalyze the cyclization of 2-pyruvoylaminobenzamide to yield acetyl-4(3H)-quinazolidinone. A final reduction of acetyl-4(3H)-quinazolidinone catalyzed by the oxidoreductase chry4 would result in chrysogine. This Gibberella zeae (strain ATCC MYA-4620 / CBS 123657 / FGSC 9075 / NRRL 31084 / PH-1) (Wheat head blight fungus) protein is Short-chain dehydrogenase chry4.